The primary structure comprises 316 residues: ATP synthase gamma chain (316 aa).

It belongs to the ATPase gamma chain family. In terms of assembly, F-type ATPases have 2 components, CF(1) - the catalytic core - and CF(0) - the membrane proton channel. CF(1) has five subunits: alpha(3), beta(3), gamma(1), delta(1), epsilon(1). CF(0) has three main subunits: a, b and c.

It localises to the cellular thylakoid membrane. Functionally, produces ATP from ADP in the presence of a proton gradient across the membrane. The gamma chain is believed to be important in regulating ATPase activity and the flow of protons through the CF(0) complex. The protein is ATP synthase gamma chain of Synechococcus sp. (strain WH7803).